Here is a 100-residue protein sequence, read N- to C-terminus: Urease subunit gamma (100 aa).

The protein belongs to the urease gamma subunit family. As to quaternary structure, heterotrimer of UreA (gamma), UreB (beta) and UreC (alpha) subunits. Three heterotrimers associate to form the active enzyme.

Its subcellular location is the cytoplasm. The enzyme catalyses urea + 2 H2O + H(+) = hydrogencarbonate + 2 NH4(+). It functions in the pathway nitrogen metabolism; urea degradation; CO(2) and NH(3) from urea (urease route): step 1/1. This chain is Urease subunit gamma, found in Bacillus sp. (strain TB-90).